We begin with the raw amino-acid sequence, 175 residues long: Large ribosomal subunit protein uL16 (175 aa).

It belongs to the universal ribosomal protein uL16 family.

The protein is Large ribosomal subunit protein uL16 of Metallosphaera sedula (strain ATCC 51363 / DSM 5348 / JCM 9185 / NBRC 15509 / TH2).